Here is a 907-residue protein sequence, read N- to C-terminus: MFQNKEQTESILVWEKIVSIFSIPSQNEILNFKQKSPNNIDNNLKQLFNFVKLYKLESLVLDWYFESIKKYFKSTLSNEFWKFFNNVNLAELDSSTTSGRQLKFINHQFALSINLLHKVFSFFKSNLFLFYELLFKKESYNFNFLIKKLQDLLITNIMHTTNQQTKYFNTILFMFFERDFISFTKSFYHSKKQILKDEEENNNNSKDLEFNDQQQEEEEEEEENEEESKSYIIMEMSFEDSITDINIKEDSFMDLCKKLQDLNFIVISEEIFTQILFKKVFEYIETRCKGVFEKSFLKSILEWADQVIFKWLAMILLSSTTTTKINNYNDIINNNDDDNDDDDDDENKENSLKIFNQWKKRLEFSIYENYSQQRISELFDMIVQYPDSLPSLEDLSICFQKIPIEKTMITNLKRVLHNRLLHPGANTSDIITQYISTIHAMDIIDPSGMVMEKVGKPIREYLSQREDTIRCIISSFTEESNEIYQELCNYDPQDNGGDDDSNNSLLAFGNCDLYVDEGDNFSSIDDFKFWIPNKIDGSSTTISIGNAKANNNNKKKKKKDTISHLVNIYDGIDLFINEYRSMLSDRLLSVVDFDLDKEIKNIELLKLRFGDSVLFNCEIMIKDMVDSKRLNLQIKNSQGVNNNNNNNNNNNNELKEFETLILSQLFWPTLKGDEFKYPKSIEKKMQIYSKEYERIKTPRQLIWKQHLGLVDLDLEIGNNIQSFQVSPIHATLIMLFESDDGDDDDEKELTLEYLSKQLEISKDLVKKKLIFWLNNQIIKETSHETYKINNKEKEEQKQRQQQIENDDQDESSSDDDDDDNNIVVEEEEEEKSTSAKEKEEQMRVVESFIIGMLINFKTLPLERIHSMLTMFNSELYTSTIHELKAFLSKLVNEEKIELVGNDFKIKK.

2 disordered regions span residues 203–228 (NNSK…EEES) and 790–838 (NKEK…AKEK). 2 stretches are compositionally biased toward acidic residues: residues 214-226 (QQEE…ENEE) and 804-830 (ENDD…EEEE).

It belongs to the cullin family. As to quaternary structure, the APC/C is composed of at least 13 subunits that stay tightly associated throughout the cell cycle: anapc1, anapc2, anapc3, anapc4, anapc5, anapc6, anapc7, anapc8, anapc10, anapc11, cdc20, cdc26 and cdh1.

It localises to the nucleus. It functions in the pathway protein modification; protein ubiquitination. In terms of biological role, component of the anaphase promoting complex/cyclosome (APC/C), a cell cycle-regulated E3 ubiquitin-protein ligase complex that controls progression through mitosis and the G1 phase of the cell cycle. The protein is Anaphase-promoting complex subunit 2 (anapc2) of Dictyostelium discoideum (Social amoeba).